Here is a 340-residue protein sequence, read N- to C-terminus: N-acetyl-gamma-glutamyl-phosphate reductase (340 aa).

Residue C147 is part of the active site.

Belongs to the NAGSA dehydrogenase family. Type 1 subfamily.

It localises to the cytoplasm. It carries out the reaction N-acetyl-L-glutamate 5-semialdehyde + phosphate + NADP(+) = N-acetyl-L-glutamyl 5-phosphate + NADPH + H(+). The protein operates within amino-acid biosynthesis; L-arginine biosynthesis; N(2)-acetyl-L-ornithine from L-glutamate: step 3/4. Catalyzes the NADPH-dependent reduction of N-acetyl-5-glutamyl phosphate to yield N-acetyl-L-glutamate 5-semialdehyde. This Lactococcus lactis subsp. lactis (strain IL1403) (Streptococcus lactis) protein is N-acetyl-gamma-glutamyl-phosphate reductase.